The sequence spans 411 residues: MLLFLLRRIFDCRYKYKLFVKALVLFLTIVYNAGLVHFFFRTTSLDDSPEMNHVDYVAHVIVMPIVLSIGMINQCLNVCTLLHIRTSIFLYLKASAIADILSIVAFIPFLFRHAKLIDPSWELGMFYHAHLELPLINALISASALNIVAMTVDRYVSVCHPIKFFQNNETKPSRRRTMLIIVMIYFIALMIYFPSVFQKKLGVVTDALTNKTIYTIVRNEDVEALQVFKFYLIVRECICRWGPVLLLVILNMCVVRGLRKIDKRNWFWRQPSQNSRTETLAQRQLRSPRDDRSRISVLLFVTSATFIICNIPASVISFFVRRVSGSLFWQIFRAIANLLQVTSYLYNFYLYALCSSEYRHAFLRLFGCRSSLSPTSTGDSPTVRVSVHGKRCHQAVVLLGNENHENPVDEV.

Topologically, residues 1–18 are cytoplasmic; the sequence is MLLFLLRRIFDCRYKYKL. Residues 19–39 form a helical membrane-spanning segment; the sequence is FVKALVLFLTIVYNAGLVHFF. Residues 40-55 lie on the Extracellular side of the membrane; the sequence is FRTTSLDDSPEMNHVD. Residues 56-76 form a helical membrane-spanning segment; that stretch reads YVAHVIVMPIVLSIGMINQCL. Topologically, residues 77–87 are cytoplasmic; it reads NVCTLLHIRTS. The chain crosses the membrane as a helical span at residues 88–108; that stretch reads IFLYLKASAIADILSIVAFIP. Over 109–131 the chain is Extracellular; the sequence is FLFRHAKLIDPSWELGMFYHAHL. The helical transmembrane segment at 132–152 threads the bilayer; that stretch reads ELPLINALISASALNIVAMTV. Over 153–176 the chain is Cytoplasmic; sequence DRYVSVCHPIKFFQNNETKPSRRR. A helical transmembrane segment spans residues 177–197; sequence TMLIIVMIYFIALMIYFPSVF. At 198–229 the chain is on the extracellular side; sequence QKKLGVVTDALTNKTIYTIVRNEDVEALQVFK. N-linked (GlcNAc...) asparagine glycosylation is present at Asn-210. The chain crosses the membrane as a helical span at residues 230–250; it reads FYLIVRECICRWGPVLLLVIL. The Cytoplasmic portion of the chain corresponds to 251–299; that stretch reads NMCVVRGLRKIDKRNWFWRQPSQNSRTETLAQRQLRSPRDDRSRISVLL. The chain crosses the membrane as a helical span at residues 300–320; it reads FVTSATFIICNIPASVISFFV. Residues 321–333 are Extracellular-facing; sequence RRVSGSLFWQIFR. A helical membrane pass occupies residues 334–354; sequence AIANLLQVTSYLYNFYLYALC. The Cytoplasmic portion of the chain corresponds to 355–411; that stretch reads SSEYRHAFLRLFGCRSSLSPTSTGDSPTVRVSVHGKRCHQAVVLLGNENHENPVDEV.

The protein belongs to the G-protein coupled receptor 1 family.

Its subcellular location is the cell membrane. Not known. Putative receptor. The protein is Probable G-protein coupled receptor AH9.1 of Caenorhabditis elegans.